A 344-amino-acid polypeptide reads, in one-letter code: Sorting nexin-16 (344 aa).

Positions 1–10 are enriched in pro residues; the sequence is MATPYVPVPM. Disordered regions lie at residues 1–49 and 83–105; these read MATP…DSSV and SIEY…NWED. A compositionally biased stretch (polar residues) spans 14-26; the sequence is NSASSFTNNRNQR. Low complexity predominate over residues 27–40; the sequence is SSSFGSVSTSSNSS. Positions 88–105 are enriched in basic and acidic residues; that stretch reads ARPRDTEEQHPDALNWED. Residues 105–218 enclose the PX domain; sequence DRPSTPTILG…EFLCLDDPPG (114 aa). Positions 144, 146, and 184 each coordinate a 1,2-diacyl-sn-glycero-3-phospho-(1D-myo-inositol-3-phosphate). Residue Ser222 is modified to Phosphoserine. Residues 223–278 are a coiled coil; the sequence is LEESRAFCETLEETNYHLQRELLEKQKEVESLKKLLGEKQLHIDALETRIRTLSLE.

It belongs to the sorting nexin family. As to quaternary structure, homooligomer. Interacts with EGFR.

It is found in the early endosome membrane. The protein localises to the late endosome membrane. Its subcellular location is the cytoplasm. The protein resides in the lysosome. May be involved in several stages of intracellular trafficking. Plays a role in protein transport from early to late endosomes. Plays a role in protein transport to the lysosome. Promotes degradation of EGFR after EGF signaling. The chain is Sorting nexin-16 (Snx16) from Rattus norvegicus (Rat).